The following is a 107-amino-acid chain: Pyrimidine/purine nucleoside phosphorylase (107 aa).

The protein belongs to the nucleoside phosphorylase PpnP family.

It catalyses the reaction a purine D-ribonucleoside + phosphate = a purine nucleobase + alpha-D-ribose 1-phosphate. The catalysed reaction is adenosine + phosphate = alpha-D-ribose 1-phosphate + adenine. It carries out the reaction cytidine + phosphate = cytosine + alpha-D-ribose 1-phosphate. The enzyme catalyses guanosine + phosphate = alpha-D-ribose 1-phosphate + guanine. It catalyses the reaction inosine + phosphate = alpha-D-ribose 1-phosphate + hypoxanthine. The catalysed reaction is thymidine + phosphate = 2-deoxy-alpha-D-ribose 1-phosphate + thymine. It carries out the reaction uridine + phosphate = alpha-D-ribose 1-phosphate + uracil. The enzyme catalyses xanthosine + phosphate = alpha-D-ribose 1-phosphate + xanthine. Catalyzes the phosphorolysis of diverse nucleosides, yielding D-ribose 1-phosphate and the respective free bases. Can use uridine, adenosine, guanosine, cytidine, thymidine, inosine and xanthosine as substrates. Also catalyzes the reverse reactions. In Aromatoleum aromaticum (strain DSM 19018 / LMG 30748 / EbN1) (Azoarcus sp. (strain EbN1)), this protein is Pyrimidine/purine nucleoside phosphorylase.